The following is a 67-amino-acid chain: Large ribosomal subunit protein uL29 (67 aa).

The protein belongs to the universal ribosomal protein uL29 family.

The chain is Large ribosomal subunit protein uL29 from Wolbachia pipientis subsp. Culex pipiens (strain wPip).